We begin with the raw amino-acid sequence, 86 residues long: RNA-binding protein Hfq (86 aa).

The Sm domain occupies 9 to 68 (DPFLNALRRERIPVSIYLVNGIKLQGQIESFDQFVILLKNTVNQMVYKHAISTVVPARPV). The tract at residues 65-86 (ARPVSHHSGERGSDRPSEKSED) is disordered. Residues 71 to 86 (HSGERGSDRPSEKSED) show a composition bias toward basic and acidic residues.

The protein belongs to the Hfq family. In terms of assembly, homohexamer.

Functionally, RNA chaperone that binds small regulatory RNA (sRNAs) and mRNAs to facilitate mRNA translational regulation in response to envelope stress, environmental stress and changes in metabolite concentrations. Also binds with high specificity to tRNAs. This Vibrio vulnificus (strain YJ016) protein is RNA-binding protein Hfq.